Here is a 433-residue protein sequence, read N- to C-terminus: Serine hydroxymethyltransferase (433 aa).

Residues Leu132 and Gly136–Leu138 each bind (6S)-5,6,7,8-tetrahydrofolate. Lys241 carries the post-translational modification N6-(pyridoxal phosphate)lysine.

This sequence belongs to the SHMT family. As to quaternary structure, homodimer. It depends on pyridoxal 5'-phosphate as a cofactor.

It localises to the cytoplasm. It carries out the reaction (6R)-5,10-methylene-5,6,7,8-tetrahydrofolate + glycine + H2O = (6S)-5,6,7,8-tetrahydrofolate + L-serine. Its pathway is one-carbon metabolism; tetrahydrofolate interconversion. It functions in the pathway amino-acid biosynthesis; glycine biosynthesis; glycine from L-serine: step 1/1. In terms of biological role, catalyzes the reversible interconversion of serine and glycine with tetrahydrofolate (THF) serving as the one-carbon carrier. This reaction serves as the major source of one-carbon groups required for the biosynthesis of purines, thymidylate, methionine, and other important biomolecules. Also exhibits THF-independent aldolase activity toward beta-hydroxyamino acids, producing glycine and aldehydes, via a retro-aldol mechanism. In Afipia carboxidovorans (strain ATCC 49405 / DSM 1227 / KCTC 32145 / OM5) (Oligotropha carboxidovorans), this protein is Serine hydroxymethyltransferase.